We begin with the raw amino-acid sequence, 430 residues long: Adenylosuccinate synthetase (430 aa).

GTP-binding positions include 12-18 (GDEGKGK) and 40-42 (GHT). The active-site Proton acceptor is the D13. Residues D13 and G40 each coordinate Mg(2+). IMP-binding positions include 13–16 (DEGK), 38–41 (NAGH), T130, R144, Q224, T239, and R303. Catalysis depends on H41, which acts as the Proton donor. A substrate-binding site is contributed by 299–305 (VNTGRKR). GTP-binding positions include R305, 331 to 333 (KLD), and 413 to 415 (STS).

The protein belongs to the adenylosuccinate synthetase family. As to quaternary structure, homodimer. Mg(2+) is required as a cofactor.

Its subcellular location is the cytoplasm. It carries out the reaction IMP + L-aspartate + GTP = N(6)-(1,2-dicarboxyethyl)-AMP + GDP + phosphate + 2 H(+). The protein operates within purine metabolism; AMP biosynthesis via de novo pathway; AMP from IMP: step 1/2. Plays an important role in the de novo pathway of purine nucleotide biosynthesis. Catalyzes the first committed step in the biosynthesis of AMP from IMP. This is Adenylosuccinate synthetase from Rhodopseudomonas palustris (strain ATCC BAA-98 / CGA009).